The following is a 250-amino-acid chain: Copper homeostasis protein cutC homolog (250 aa).

Belongs to the CutC family.

Involved in copper homeostasis. Affects body morphology and length, egg laying and brood size. This Caenorhabditis elegans protein is Copper homeostasis protein cutC homolog (cutc-1).